Consider the following 485-residue polypeptide: Zinc finger protein 165 (485 aa).

Lysine 23 is covalently cross-linked (Glycyl lysine isopeptide (Lys-Gly) (interchain with G-Cter in SUMO2)). The SCAN box domain occupies 62–127 (GPREALSRLR…EEAVTILEDL (66 aa)). Glycyl lysine isopeptide (Lys-Gly) (interchain with G-Cter in SUMO2) cross-links involve residues lysine 162 and lysine 195. A C2H2-type 1; degenerate zinc finger spans residues 290-314 (KSCKHGTCDQSFKWNSDFINHQIIY). 5 C2H2-type zinc fingers span residues 344 to 366 (HQCNECGKAFRHSSKLARHQRIH), 372 to 394 (YECNECGKSFAESSDLTRHRRIH), 400 to 422 (FGCKECGRAFNLNSHLIRHQRIH), 428 to 450 (YECSECGKTFRVSSHLIRHFRIH), and 456 to 478 (YECSECGRAFSQSSNLSQHQRIH).

The protein belongs to the krueppel C2H2-type zinc-finger protein family. In terms of tissue distribution, expressed specifically in testis.

The protein resides in the nucleus. May be involved in transcriptional regulation. The protein is Zinc finger protein 165 (ZNF165) of Homo sapiens (Human).